The chain runs to 281 residues: Bifunctional N-acyl-homoserine lactone acylase/prephenate dehydratase (281 aa).

Residues 6 to 181 (IIAFQGRPGA…NTTRFYIASR (176 aa)) form the Prephenate dehydratase domain. Positions 196–273 (TLLFRVNNQP…EQQEILGVYP (78 aa)) constitute an ACT domain. The L-phenylalanine site is built by Ala-207, Leu-208, Asn-221, and Met-222.

As to quaternary structure, homodimer.

The catalysed reaction is an N-acyl-L-homoserine lactone + H2O = L-homoserine lactone + a carboxylate. It catalyses the reaction prephenate + H(+) = 3-phenylpyruvate + CO2 + H2O. Its pathway is amino-acid biosynthesis; L-phenylalanine biosynthesis; phenylpyruvate from prephenate: step 1/1. Its function is as follows. Multifunctional enzyme that acts on N-acyl-homoserine lactones (AHLs), beta-lactam antibiotics and shows prephenate dehydratase activity. Acts as an acylase on AHL and hydrolyzes the amide bond of the acyl side-chain of AHL molecules, releasing homoserine lactone (HSL) and the fatty acid. Can use different 3-oxo-acyl homoserine lactones, such as 3-oxo-decanoyl homoserine lactone, which is the preferred substrate, 3-oxo-octanoyl homoserine lactone, 3-oxo-hexanoyl homoserine lactone and 3-oxo-dodecanoyl homoserine lactone. It can also degrade various beta-lactam antibiotics, including penicillin G, amoxicillin and ampicillin, but not cefotaxime. In addition, it can complement a phenylalanine auxotrophic E.coli mutant, which carries a kanamycin gene inserted into pheA, suggesting that GqqA can also function as a prephenate dehydratase. Involved in bacterial quorum quenching (QQ) and cellulose biofilm formation. This is Bifunctional N-acyl-homoserine lactone acylase/prephenate dehydratase from Komagataeibacter europaeus (Gluconacetobacter europaeus).